We begin with the raw amino-acid sequence, 490 residues long: Cytochrome P450 monooxygenase aclL (490 aa).

A helical membrane pass occupies residues 1–21 (MLFSLGPLTIVYGLVIFVVAK). Asparagine 176 carries an N-linked (GlcNAc...) asparagine glycan. Residue cysteine 434 participates in heme binding.

This sequence belongs to the cytochrome P450 family. Requires heme as cofactor.

The protein localises to the membrane. Its pathway is mycotoxin biosynthesis. Cytochrome P450 monooxygenase; part of the gene cluster that mediates the biosynthesis of aspirochlorine (or antibiotic A30641), an unusual halogenated spiro compound with distinctive antifungal properties due to selective inhibition of protein biosynthesis, and which is also active against bacteria, viruses, and murine tumor cells. The non-ribosomal peptide synthetase (NRPS) aclP is responsible the formation of the diketopiperazine (DKP) core from the condensation of 2 phenylalanine residues. One Phe residue is tailored into chlorotyrosine by hydroxylation and chlorination, whereas the second Phe undergoes an unprecedented C-C bond cleavage to be converted into glycine. After formation of the DKP, sulfur is incorporated into the DKP by conjugation with glutathione by aclG, followed by its stepwise degradation to the thiol by aclI, aclJ and aclK, and the dithiol oxidation by aclT. In addition, oxygenases (aclB, aclC, aclL and aclO) and O-methyltransferases (aclM and aclU) act as tailoring enzymes to produce the intermediate dechloroaspirochlorine. Ultimately, chlorination of dechloroaspirochlorine by the halogenase aclH is the last step in the aspirochlorine pathway. The sequence is that of Cytochrome P450 monooxygenase aclL from Aspergillus oryzae (strain ATCC 42149 / RIB 40) (Yellow koji mold).